A 296-amino-acid chain; its full sequence is Protein FAM110A (296 aa).

Disordered stretches follow at residues 61–97 (NTRQEPVQPPLVRQPLFSPGPRGPVLTPSRRVLPCSG) and 117–192 (PVSP…KSDL). Pro residues-rich tracts occupy residues 139 to 148 (PATPPRPPPS) and 161 to 170 (PASPARPYPS).

It belongs to the FAM110 family. As to quaternary structure, may interact with CSPP1.

The protein localises to the cytoplasm. It localises to the cytoskeleton. The protein resides in the microtubule organizing center. It is found in the centrosome. Its subcellular location is the spindle pole. The sequence is that of Protein FAM110A (Fam110a) from Mus musculus (Mouse).